Reading from the N-terminus, the 93-residue chain is UPF0223 protein SAG0995 (93 aa).

The protein belongs to the UPF0223 family.

The sequence is that of UPF0223 protein SAG0995 from Streptococcus agalactiae serotype V (strain ATCC BAA-611 / 2603 V/R).